The sequence spans 516 residues: Nucleolar complex protein 4 homolog (516 aa).

3 helical membrane passes run Ser-296 to Ile-316, Phe-347 to Ala-367, and Leu-375 to Leu-395.

This sequence belongs to the CBF/MAK21 family.

The protein localises to the nucleus membrane. It is found in the nucleus. The protein resides in the nucleolus. This Rattus norvegicus (Rat) protein is Nucleolar complex protein 4 homolog (Noc4l).